Consider the following 151-residue polypeptide: Homeobox protein HD-1 (151 aa).

The homeobox DNA-binding region spans 87 to 146 (ESIKSRRFPKFITEALERSFEIDQYPSEAEKARLAKICKLSTKQINNWFTNKRNRTKGHE).

Its subcellular location is the nucleus. The sequence is that of Homeobox protein HD-1 (HD-1) from Encephalitozoon cuniculi (strain GB-M1) (Microsporidian parasite).